A 400-amino-acid chain; its full sequence is Phosphoglycerate kinase (400 aa).

Substrate is bound by residues 23-25 (DLN), Arg-38, 61-64 (HFGR), Arg-120, and Arg-153. Residues Lys-203, Glu-325, and 355-358 (GGDT) each bind ATP.

It belongs to the phosphoglycerate kinase family. Monomer.

Its subcellular location is the cytoplasm. The catalysed reaction is (2R)-3-phosphoglycerate + ATP = (2R)-3-phospho-glyceroyl phosphate + ADP. Its pathway is carbohydrate degradation; glycolysis; pyruvate from D-glyceraldehyde 3-phosphate: step 2/5. This is Phosphoglycerate kinase from Methylorubrum extorquens (strain PA1) (Methylobacterium extorquens).